Consider the following 141-residue polypeptide: Putative pre-16S rRNA nuclease (141 aa).

Belongs to the YqgF nuclease family.

It localises to the cytoplasm. In terms of biological role, could be a nuclease involved in processing of the 5'-end of pre-16S rRNA. The polypeptide is Putative pre-16S rRNA nuclease (Coxiella burnetii (strain CbuK_Q154) (Coxiella burnetii (strain Q154))).